We begin with the raw amino-acid sequence, 584 residues long: (+)-larreatricin hydroxylase, chloroplastic (584 aa).

The N-terminal 32 residues, 1–32, are a transit peptide targeting the chloroplast; that stretch reads MASLSSQSKLLATPYSFPYHTKPSRVSLRRVS. Residues 33–79 constitute a thylakoid transit peptide; it reads CKASNDNKDKPNDQEKTFSIDRRNMLIGLGGLYGASNVFPSNQSTLA. 2 cysteine pairs are disulfide-bonded: cysteine 91/cysteine 106 and cysteine 105/cysteine 168. 6 residues coordinate Cu cation: histidine 167, histidine 188, histidine 197, histidine 319, histidine 323, and histidine 353. The segment at residues 171–188 is a cross-link (2'-(S-cysteinyl)-histidine (Cys-His)); that stretch reads CNGAYDQVGFPDVNIQVH. Positions 432–584 are cleaved as a propeptide — removed in mature form; sequence RLRSKATTTT…KIEFVRDEED (153 aa).

It belongs to the tyrosinase family. It depends on Cu(2+) as a cofactor.

The protein localises to the plastid. It is found in the chloroplast thylakoid lumen. The enzyme catalyses (+)-larreatricin + AH2 + O2 = (+)-3'-hydroxylarreatricin + A + H2O. Its function is as follows. Enantio-specific polyphenol oxidase involved in aromatic ring hydroxylation. Involved in the biosynthesis of the creosote bush 8-8' linked lignans. Has a strong preference for the 3' position of (+)-larreatricin. This chain is (+)-larreatricin hydroxylase, chloroplastic, found in Larrea tridentata (Creosote bush).